A 258-amino-acid polypeptide reads, in one-letter code: Snake venom serine proteinase 8 (258 aa).

Residues 1–18 form the signal peptide; that stretch reads MVLIRVLANLLILQLSYA. Residues 19-24 constitute a propeptide that is removed on maturation; sequence QKSSEL. The Peptidase S1 domain occupies 25–249; sequence VIGGDECNIN…YNDWIQSIIA (225 aa). Cystine bridges form between cysteine 31-cysteine 163, cysteine 50-cysteine 66, cysteine 98-cysteine 256, cysteine 142-cysteine 210, cysteine 174-cysteine 189, and cysteine 200-cysteine 225. The N-linked (GlcNAc...) asparagine glycan is linked to asparagine 44. Active-site charge relay system residues include histidine 65 and aspartate 110. Serine 204 functions as the Charge relay system in the catalytic mechanism.

The protein belongs to the peptidase S1 family. Snake venom subfamily. Monomer. As to expression, expressed by the venom gland.

Its subcellular location is the secreted. In terms of biological role, snake venom serine protease that may act in the hemostasis system of the prey. This is Snake venom serine proteinase 8 from Crotalus adamanteus (Eastern diamondback rattlesnake).